The sequence spans 218 residues: uncharacterized protein (218 aa).

Residues H57, H59, D61, H62, H138, D158, and H199 each coordinate Zn(2+).

This sequence belongs to the metallo-beta-lactamase superfamily. Glyoxalase II family. It depends on Zn(2+) as a cofactor.

This is an uncharacterized protein from Mycobacterium leprae (strain TN).